Here is a 1272-residue protein sequence, read N- to C-terminus: MDLFDFFRDWDLEQQCHYEQDRSALKKREWERRNQEVQQEEDLFSSGFDLFGEPYKTNKGDALANRVQNTLGNYDEMKDLLTNHSNQNHLVGIPKNSVPQNPNNKNEPSFFPEQKNRIIPPHQDNTHPSAPMPPPSVVILNSTLIHSNRKSKPEWSRDSHNPSTVLASQASGQPNKMQTLTQDQSQARLEDFFVYPAEQPQIGEVEESNPSAKEDSNPKSSGEDAFKEIFQSNSPEESEFAVQAPGSPLVASSLLAPSSGLSVQNFPPGLYCKTSMGQQKPTAYVRPMDGQDQAPDISPTLKPSIEFENSFGNLSFGTLLDGKPSAASSKTKLPKFTILQTSEVSLPSDPSCVEEILRESQHLTPGFTLQKWNDPTTRASTKMLEDDLKLSSDEDDLEPVKTLTTQCTATELYQAVEKAKPRNNPVNPPLATPQPPPAVQASGGSGSSSESESSSESDSDTESSTTDSESNEAPRVATPEPEPPSTNKWQLDKWLNKVTSQNKSFICGQNETPMETISLPPPIIQPMEVQMKVKTNASQVPAEPKERPLLSLIREKARPRPTQKIPETKALKHKLSTTSETVSQRTIGKKQPKKVEKNTSIDEFTWPKPNITSSTPKEKESVELHDPPRGRNKATAHKPAPRKEPRPNIPLAPEKKKYRGPGKIVPKSREFIETDSSTSDSNTDQEETLQIKVLPPCIISGGNTAKSKEICGASLTLSTLMNSSGSNNNLSISNEEPTFSPIPVMQTEMLSPLRDHENLKNLWVKIDLDLLSRVPGHNSLHAAPAKPDHKETATKPKRQTAVTAVEKPAPKGKRKHKPTEVAEKIPEKKQRLEEATTICLLPPCISPAPPHKPPNTRENNSSRRANRRKEEKLFPPPLSPLPEDPPRRRNVSGNNGPFGQDKNIAMTGQITSTKPKRNEGKFCATFKGISVNEGDTPKKASSATMTITNTAVATATVTATAIVTTTVTATATATATTTTTTTTISTITSTITTGLMDSSHLEMTSWAALPLLSSSSTNVRRPKLTFDDSVHNADYYMQEAKKLKHKADALFEKFGKAVNYADAALSFTECGNAMERDPLEAKSPYTMYSETVELLRYAMRLKNFASPLASDGDKKLAVLCYRCLSLLYLRMFKLKKDHAMKYSRSLMEYFKQNASKVAQIPSPWVGNGKNTPSPVSLNNVSPINAMGNCNNGPVTIPQRIHHMAASHVNITSNVLRGYEHWDMADKLTRENKEFFGDLDTLMGPLTQHSSMTNLVRYVRQGLCWLRIDAHLL.

2 disordered regions span residues 93 to 183 (IPKN…LTQD) and 200 to 223 (PQIG…SSGE). The span at 97–107 (SVPQNPNNKNE) shows a compositional bias: polar residues. A compositionally biased stretch (basic and acidic residues) spans 151-160 (SKPEWSRDSH). Polar residues predominate over residues 161 to 183 (NPSTVLASQASGQPNKMQTLTQD). Residues 212–223 (AKEDSNPKSSGE) are compositionally biased toward basic and acidic residues. Residue S391 is modified to Phosphoserine. Disordered stretches follow at residues 418-491 (KAKP…KWQL), 535-687 (TNAS…DQEE), 779-829 (SLHA…PEKK), and 842-903 (PPCI…QDKN). Pro residues predominate over residues 426-438 (VNPPLATPQPPPA). Over residues 439 to 452 (VQASGGSGSSSESE) the composition is skewed to low complexity. Residue T478 is modified to Phosphothreonine. The segment covering 543–558 (EPKERPLLSLIREKAR) has biased composition (basic and acidic residues). Polar residues predominate over residues 576–586 (STTSETVSQRT). Residues 616 to 629 (PKEKESVELHDPPR) are compositionally biased toward basic and acidic residues. The span at 630-640 (GRNKATAHKPA) shows a compositional bias: basic residues. The span at 818–829 (PTEVAEKIPEKK) shows a compositional bias: basic and acidic residues. 2 stretches are compositionally biased toward pro residues: residues 844 to 853 (CISPAPPHKP) and 874 to 883 (FPPPLSPLPE).

It belongs to the AF4 family.

It localises to the nucleus speckle. In terms of biological role, RNA-binding protein. Might be involved in alternative splicing regulation through an interaction with G-quartet RNA structure. This chain is AF4/FMR2 family member 2 (AFF2), found in Pongo pygmaeus (Bornean orangutan).